Reading from the N-terminus, the 406-residue chain is Argininosuccinate synthase (406 aa).

ATP contacts are provided by residues 14–22 (AYSGGLDTS) and A41. Y92 and S97 together coordinate L-citrulline. An ATP-binding site is contributed by G122. 3 residues coordinate L-aspartate: T124, N128, and D129. Residue N128 coordinates L-citrulline. L-citrulline-binding residues include R132, S181, S190, E266, and Y278.

It belongs to the argininosuccinate synthase family. Type 1 subfamily. In terms of assembly, homotetramer.

The protein localises to the cytoplasm. The enzyme catalyses L-citrulline + L-aspartate + ATP = 2-(N(omega)-L-arginino)succinate + AMP + diphosphate + H(+). Its pathway is amino-acid biosynthesis; L-arginine biosynthesis; L-arginine from L-ornithine and carbamoyl phosphate: step 2/3. This is Argininosuccinate synthase from Geobacter metallireducens (strain ATCC 53774 / DSM 7210 / GS-15).